A 594-amino-acid polypeptide reads, in one-letter code: Adenine deaminase 1 (594 aa).

This sequence belongs to the metallo-dependent hydrolases superfamily. Adenine deaminase family. It depends on Mn(2+) as a cofactor.

It carries out the reaction adenine + H2O + H(+) = hypoxanthine + NH4(+). In Jannaschia sp. (strain CCS1), this protein is Adenine deaminase 1.